The primary structure comprises 470 residues: Ribulose bisphosphate carboxylase large chain (470 aa).

Residues asparagine 115 and threonine 165 each coordinate substrate. Residue lysine 167 is the Proton acceptor of the active site. A substrate-binding site is contributed by lysine 169. The Mg(2+) site is built by lysine 193, aspartate 195, and glutamate 196. Position 193 is an N6-carboxylysine (lysine 193). Histidine 286 acts as the Proton acceptor in catalysis. Arginine 287, histidine 319, and serine 371 together coordinate substrate.

The protein belongs to the RuBisCO large chain family. Type I subfamily. As to quaternary structure, heterohexadecamer of 8 large chains and 8 small chains. Requires Mg(2+) as cofactor.

The protein resides in the carboxysome. It catalyses the reaction 2 (2R)-3-phosphoglycerate + 2 H(+) = D-ribulose 1,5-bisphosphate + CO2 + H2O. It carries out the reaction D-ribulose 1,5-bisphosphate + O2 = 2-phosphoglycolate + (2R)-3-phosphoglycerate + 2 H(+). Functionally, ruBisCO catalyzes two reactions: the carboxylation of D-ribulose 1,5-bisphosphate, the primary event in carbon dioxide fixation, as well as the oxidative fragmentation of the pentose substrate in the photorespiration process. Both reactions occur simultaneously and in competition at the same active site. The sequence is that of Ribulose bisphosphate carboxylase large chain from Synechococcus sp. (strain CC9311).